The chain runs to 343 residues: Cyclic AMP-AMP-AMP synthase (343 aa).

It belongs to the CD-NTase family. D01 subfamily. It depends on Mg(2+) as a cofactor.

It catalyses the reaction 3 ATP = 2',3',3'-c-tri-AMP + 3 diphosphate. In terms of biological role, cyclic nucleotide synthase (second messenger synthase) of a CBASS antivirus system. CBASS (cyclic oligonucleotide-based antiphage signaling system) provides immunity against bacteriophage. The CD-NTase protein synthesizes cyclic nucleotides in response to infection; these serve as specific second messenger signals. The signals activate a diverse range of effectors, leading to bacterial cell death and thus abortive phage infection. A type II-C(AAAA) CBASS system. Cyclic trinucleotide synthase that catalyzes the synthesis of 2',3',3'-cyclic AMP-AMP-AMP (2',3',3'-c-tri-AMP or 2'3'3'-cAAA) as the major product, as well as another cyclic AMP(4) 2'-5'-linked minor product that acts as a second messenger for cell signal transduction. This chain is Cyclic AMP-AMP-AMP synthase, found in Acinetobacter sp. (strain ATCC 27244 / 9458).